A 743-amino-acid chain; its full sequence is Peptide transporter family 1 (743 aa).

Positions 1-28 (MASEITNGKNGQNGKNGQKEESDSQIAP) are disordered. A compositionally biased stretch (low complexity) spans 7 to 16 (NGKNGQNGKN). Helical transmembrane passes span 74 to 94 (VLFH…ALIA), 104 to 124 (ILYL…GAVP), 132 to 152 (AVTV…KPCV), 173 to 193 (FSLF…FTPI), 207 to 227 (FSLA…IFMA), 334 to 354 (VVNP…IYPA), 364 to 384 (LQKL…SAGL), 597 to 619 (LPQI…EFSY), 629 to 649 (VLQA…VVIA), and 659 to 679 (GEFT…LWLA).

It belongs to the major facilitator superfamily. Proton-dependent oligopeptide transporter (POT/PTR) (TC 2.A.17) family. In terms of tissue distribution, expressed in thorax and abdomen of females: apical epithelial membranes of midgut, rectum, and reproductive tract. Also expressed in neuropil of the central nervous system, with elevated expression within the alpha- and beta-lobes of the mushroom bodies.

It is found in the membrane. In terms of biological role, important role in absorption of dietary peptides. High-affinity transporter of alanylalanine. Dipeptide transport activity is proton dependent. This chain is Peptide transporter family 1 (yin), found in Drosophila melanogaster (Fruit fly).